Reading from the N-terminus, the 726-residue chain is X-ray repair cross-complementing protein 5 (726 aa).

Residues 8-160 enclose the VWFA domain; sequence AVVLCMDVGL…ANLKKAEITL (153 aa). The leucine-zipper stretch occupies residues 137 to 164; that stretch reads LSSPFSVDQLEVIIANLKKAEITLQFFL. Over residues 175–186 the composition is skewed to low complexity; it reads GSSNNRGNAGSS. The disordered stretch occupies residues 175–198; the sequence is GSSNNRGNAGSSDRGCGPGKGLSD. Positions 253-449 constitute a Ku domain; that stretch reads GSSLSIRIVG…NKKFTPTESQ (197 aa). The EEXXXDL motif motif lies at 714 to 722; the sequence is EDEGDVDDL.

It belongs to the ku80 family. Heterodimer composed of xrcc5/Ku80 and xrcc6/Ku70. Ubiquitinated via 'Lys-48'-linked polyubiquitination at DNA double strand break sites (DSBs), leading to its release from DSBs and subsequent proteasomal degradation. Polyubiquitination is not required for completion of NHEJ. Expressed at high levels in oocyte and testis.

Its subcellular location is the nucleus. Functionally, single-stranded DNA-dependent ATP-dependent helicase that plays a key role in DNA non-homologous end joining (NHEJ). This is X-ray repair cross-complementing protein 5 from Xenopus laevis (African clawed frog).